The following is a 331-amino-acid chain: L-lactate dehydrogenase A chain (331 aa).

NAD(+)-binding positions include 29-57 (GMVG…MEDK) and arginine 98. Residues arginine 105, asparagine 137, and arginine 168 each coordinate substrate. Residue asparagine 137 coordinates NAD(+). The active-site Proton acceptor is the histidine 192. Position 247 (threonine 247) interacts with substrate.

It belongs to the LDH/MDH superfamily. LDH family. As to quaternary structure, homotetramer.

Its subcellular location is the cytoplasm. The catalysed reaction is (S)-lactate + NAD(+) = pyruvate + NADH + H(+). It participates in fermentation; pyruvate fermentation to lactate; (S)-lactate from pyruvate: step 1/1. Interconverts simultaneously and stereospecifically pyruvate and lactate with concomitant interconversion of NADH and NAD(+). In Dissostichus mawsoni (Antarctic cod), this protein is L-lactate dehydrogenase A chain (ldha).